Consider the following 188-residue polypeptide: Protein crossbronx-like (188 aa).

The 160-residue stretch at 15-174 (KQGYHILAEY…ANQVVKLHCG (160 aa)) folds into the UBC core domain.

This sequence belongs to the ubiquitin-conjugating enzyme family. FTS subfamily.

In Drosophila simulans (Fruit fly), this protein is Protein crossbronx-like.